Here is a 563-residue protein sequence, read N- to C-terminus: Mitochondrial distribution and morphology protein 34 (563 aa).

Positions 1 to 195 constitute an SMP-LTD domain; sequence MAFNFNWSPL…LPAIIHRLSL (195 aa). Disordered regions lie at residues 298 to 499 and 531 to 563; these read ERGD…PHTP and ARRQHDDKTARQGFWSTSSNGDDAPPAYEPKAL. Polar residues-rich tracts occupy residues 303–332 and 346–357; these read AGTTTPATPSLQRPQSSLGSQSTTYTFSNR and SLVNMNSATTGL. The segment covering 365 to 383 has biased composition (basic residues); it reads SRSHPTRKKKNRVVNLRKP. Residues 386-407 are compositionally biased toward low complexity; that stretch reads TESSESGESETASTTAVSEPTV. Polar residues-rich tracts occupy residues 458 to 471 and 478 to 488; these read PSLTVQPSTPINTQ and YNQSASTSYTP. A compositionally biased stretch (basic and acidic residues) spans 531–540; the sequence is ARRQHDDKTA.

Belongs to the MDM34 family. As to quaternary structure, component of the ER-mitochondria encounter structure (ERMES) or MDM complex, composed of MMM1, MDM10, MDM12 and MDM34.

It localises to the mitochondrion outer membrane. Functionally, component of the ERMES/MDM complex, which serves as a molecular tether to connect the endoplasmic reticulum (ER) and mitochondria. Components of this complex are involved in the control of mitochondrial shape and protein biogenesis, and function in nonvesicular lipid trafficking between the ER and mitochondria. MDM34 is required for the interaction of the ER-resident membrane protein MMM1 and the outer mitochondrial membrane-resident beta-barrel protein MDM10. In Botryotinia fuckeliana (strain B05.10) (Noble rot fungus), this protein is Mitochondrial distribution and morphology protein 34.